A 110-amino-acid chain; its full sequence is SOSS complex subunit C (110 aa).

The protein belongs to the SOSS-C family. As to quaternary structure, belongs to the multiprotein complex Integrator. Component of the SOSS complex, composed of soss-b (soss-b1/nabp2 or soss-b2/nabp1), soss-a/ints3 and soss-c/inip.

It localises to the nucleus. Component of the SOSS complex, a multiprotein complex that functions downstream of the MRN complex to promote DNA repair and G2/M checkpoint. The SOSS complex associates with single-stranded DNA at DNA lesions and influences diverse endpoints in the cellular DNA damage response including cell-cycle checkpoint activation, recombinational repair and maintenance of genomic stability. Required for efficient homologous recombination-dependent repair of double-strand breaks (DSBs). This chain is SOSS complex subunit C (inip), found in Xenopus laevis (African clawed frog).